The sequence spans 193 residues: Putative manganese efflux pump MntP (193 aa).

Transmembrane regions (helical) follow at residues leucine 8–leucine 28, leucine 37–phenylalanine 57, phenylalanine 61–glycine 81, methionine 109–isoleucine 129, proline 138–isoleucine 158, and leucine 172–leucine 192.

The protein belongs to the MntP (TC 9.B.29) family.

It is found in the cell inner membrane. In terms of biological role, probably functions as a manganese efflux pump. The chain is Putative manganese efflux pump MntP from Bacteroides thetaiotaomicron (strain ATCC 29148 / DSM 2079 / JCM 5827 / CCUG 10774 / NCTC 10582 / VPI-5482 / E50).